The primary structure comprises 270 residues: uncharacterized protein (270 aa).

The 70-residue stretch at 43-112 (CTANDIKRKY…REEYDRFGIH (70 aa)) folds into the J domain. The disordered stretch occupies residues 239 to 270 (EQSKQIPTQQKPSSLPPPERALPAPTMPTPSS). The segment covering 242–251 (KQIPTQQKPS) has biased composition (polar residues). Positions 252–270 (SLPPPERALPAPTMPTPSS) are enriched in pro residues.

This is an uncharacterized protein from Schizosaccharomyces pombe (strain 972 / ATCC 24843) (Fission yeast).